A 252-amino-acid polypeptide reads, in one-letter code: tRNA pseudouridine synthase A (252 aa).

Asp52 functions as the Nucleophile in the catalytic mechanism. Tyr112 contacts substrate.

This sequence belongs to the tRNA pseudouridine synthase TruA family. In terms of assembly, homodimer.

The catalysed reaction is uridine(38/39/40) in tRNA = pseudouridine(38/39/40) in tRNA. Functionally, formation of pseudouridine at positions 38, 39 and 40 in the anticodon stem and loop of transfer RNAs. In Porphyromonas gingivalis (strain ATCC 33277 / DSM 20709 / CIP 103683 / JCM 12257 / NCTC 11834 / 2561), this protein is tRNA pseudouridine synthase A.